The sequence spans 321 residues: Olfactory receptor 5K3 (321 aa).

The Extracellular portion of the chain corresponds to 1-25 (MNKENHSLIAEFILTGFTYHPKLKT). The N-linked (GlcNAc...) asparagine glycan is linked to Asn-5. Residues 26–46 (VLFVVFFAIYLITMVGNIGLV) traverse the membrane as a helical segment. Over 47 to 56 (ALIYIEQRLH) the chain is Cytoplasmic. Residues 57 to 77 (TPMYIFLGNLVLMDSCCSSAI) traverse the membrane as a helical segment. The Extracellular segment spans residues 78-97 (TPKMLENFFSEDKRITLYEC). Cysteines 97 and 179 form a disulfide. The chain crosses the membrane as a helical span at residues 98–118 (MAQFYFLCLAETTDCFLLAAM). Over 119–143 (AYDCYVAICNPLQYHTMMSKTLCIQ) the chain is Cytoplasmic. A helical membrane pass occupies residues 144–164 (MTAGAYLAGNLHPMIEVEFLL). The Extracellular portion of the chain corresponds to 165–196 (RLTFCGSHQINHFFCDVLPLYRLSCINPYINE). The chain crosses the membrane as a helical span at residues 197 to 217 (LVLFILAGSIQIFTIVLVSYF). At 218–235 (YILFTIFTMKSKEGRGKA) the chain is on the cytoplasmic side. A helical membrane pass occupies residues 236–256 (LSTCASHFLSVSIFCDSLLFM). The Extracellular segment spans residues 257-269 (YARPGAVNEGDKD). The chain crosses the membrane as a helical span at residues 270–290 (IPVAIFYTLVIPLLNPFIYSL). Residues 291-321 (RNKEVINIMKKIMKKRKFCHILKQMSSPLAT) are Cytoplasmic-facing.

This sequence belongs to the G-protein coupled receptor 1 family.

The protein resides in the cell membrane. In terms of biological role, odorant receptor. This is Olfactory receptor 5K3 (OR5K3) from Homo sapiens (Human).